The primary structure comprises 148 residues: CASP-like protein 1 (148 aa).

The next 3 membrane-spanning stretches (helical) occupy residues 31–51 (FIYF…TSLL), 74–94 (VLLL…GYIG), and 121–141 (IAAG…SFFT).

It belongs to the Casparian strip membrane proteins (CASP) family. Homodimer and heterodimers.

It is found in the cell membrane. This Panax ginseng (Korean ginseng) protein is CASP-like protein 1.